A 197-amino-acid polypeptide reads, in one-letter code: dITP/XTP pyrophosphatase (197 aa).

Threonine 8–lysine 13 is a substrate binding site. Residues glutamate 42 and aspartate 71 each coordinate Mg(2+). Catalysis depends on aspartate 71, which acts as the Proton acceptor. Residues serine 72, phenylalanine 154 to aspartate 157, lysine 177, and histidine 182 to arginine 183 contribute to the substrate site.

This sequence belongs to the HAM1 NTPase family. In terms of assembly, homodimer. Mg(2+) serves as cofactor.

It catalyses the reaction XTP + H2O = XMP + diphosphate + H(+). The catalysed reaction is dITP + H2O = dIMP + diphosphate + H(+). The enzyme catalyses ITP + H2O = IMP + diphosphate + H(+). Pyrophosphatase that catalyzes the hydrolysis of nucleoside triphosphates to their monophosphate derivatives, with a high preference for the non-canonical purine nucleotides XTP (xanthosine triphosphate), dITP (deoxyinosine triphosphate) and ITP. Seems to function as a house-cleaning enzyme that removes non-canonical purine nucleotides from the nucleotide pool, thus preventing their incorporation into DNA/RNA and avoiding chromosomal lesions. In Oceanobacillus iheyensis (strain DSM 14371 / CIP 107618 / JCM 11309 / KCTC 3954 / HTE831), this protein is dITP/XTP pyrophosphatase.